A 327-amino-acid polypeptide reads, in one-letter code: Phenylalanine--tRNA ligase alpha subunit (327 aa).

Glutamate 252 is a Mg(2+) binding site.

Belongs to the class-II aminoacyl-tRNA synthetase family. Phe-tRNA synthetase alpha subunit type 1 subfamily. As to quaternary structure, tetramer of two alpha and two beta subunits. Mg(2+) serves as cofactor.

The protein resides in the cytoplasm. It catalyses the reaction tRNA(Phe) + L-phenylalanine + ATP = L-phenylalanyl-tRNA(Phe) + AMP + diphosphate + H(+). The protein is Phenylalanine--tRNA ligase alpha subunit of Vibrio vulnificus (strain CMCP6).